The chain runs to 134 residues: DNA-binding protein inhibitor ID-2 (134 aa).

Phosphoserine is present on residues Ser-14 and Ser-25. Positions 23-75 constitute a bHLH domain; it reads SRSKTPVDDPMSLLYNMNDCYSKLKELVPSIPQNKKVTKMEILQHVIDYILDL. The interval 30–83 is interaction with IFI204; that stretch reads DDPMSLLYNMNDCYSKLKELVPSIPQNKKVTKMEILQHVIDYILDLQIALDSHP. Positions 106 to 115 match the Nuclear export signal motif; sequence LNTDISILSL.

Interacts with GATA4 and NKX2-5. Interacts with NR0B2. Interacts with CLOCK and BMAL1. Interacts with IFI204. Interacts with NEDD9/HEF1. Interacts with ASB4; this interaction promotes ID2 proteasomal degradation. Post-translationally, polyubiquitinated; which is favored by Ifi204 and leads to proteasomal degradation. Ubiquitinated in a ASB4-depedent manner, leading to proteasomal degradation. In terms of processing, phosphorylated in vitro by CDK1, PKA and PKC.

It is found in the cytoplasm. The protein resides in the nucleus. Transcriptional regulator (lacking a basic DNA binding domain) which negatively regulates the basic helix-loop-helix (bHLH) transcription factors by forming heterodimers and inhibiting their DNA binding and transcriptional activity. Implicated in regulating a variety of cellular processes, including cellular growth, senescence, differentiation, apoptosis, angiogenesis, and neoplastic transformation. Inhibits skeletal muscle and cardiac myocyte differentiation. Regulates the circadian clock by repressing the transcriptional activator activity of the CLOCK-BMAL1 heterodimer. Restricts the CLOCK and BMAL1 localization to the cytoplasm. Plays a role in both the input and output pathways of the circadian clock: in the input component, is involved in modulating the magnitude of photic entrainment and in the output component, contributes to the regulation of a variety of liver clock-controlled genes involved in lipid metabolism. This Mus musculus (Mouse) protein is DNA-binding protein inhibitor ID-2 (Id2).